Reading from the N-terminus, the 367-residue chain is Phospho-N-acetylmuramoyl-pentapeptide-transferase (367 aa).

Transmembrane regions (helical) follow at residues 13-33 (ISGIGLASSLAAGLGIAALTL), 49-69 (LPLLLCTIASAIAGYFVVPLL), 95-115 (MGGIFFIPVAVVGACVLSNFA), 119-139 (LAVSALTLSYGLIGWIDDWQI), 154-174 (LALQICFAAAFCLWLMFNQPA), 183-203 (WVSFALPLGFLFWPLAGFVLV), 215-235 (IDGLAGGTVAIALLALGAIVA), 237-257 (TSPALMVFCAALSGSCLGFLA), 281-301 (AVALLTNSLVALFILSGIFFV), and 347-367 (VSSFYVIATILAVICLAIAPF).

Belongs to the glycosyltransferase 4 family. MraY subfamily. Mg(2+) serves as cofactor.

Its subcellular location is the cell inner membrane. It carries out the reaction UDP-N-acetyl-alpha-D-muramoyl-L-alanyl-gamma-D-glutamyl-meso-2,6-diaminopimeloyl-D-alanyl-D-alanine + di-trans,octa-cis-undecaprenyl phosphate = di-trans,octa-cis-undecaprenyl diphospho-N-acetyl-alpha-D-muramoyl-L-alanyl-D-glutamyl-meso-2,6-diaminopimeloyl-D-alanyl-D-alanine + UMP. It participates in cell wall biogenesis; peptidoglycan biosynthesis. Catalyzes the initial step of the lipid cycle reactions in the biosynthesis of the cell wall peptidoglycan: transfers peptidoglycan precursor phospho-MurNAc-pentapeptide from UDP-MurNAc-pentapeptide onto the lipid carrier undecaprenyl phosphate, yielding undecaprenyl-pyrophosphoryl-MurNAc-pentapeptide, known as lipid I. The sequence is that of Phospho-N-acetylmuramoyl-pentapeptide-transferase from Trichormus variabilis (strain ATCC 29413 / PCC 7937) (Anabaena variabilis).